Consider the following 99-residue polypeptide: Small ribosomal subunit protein bS20 (99 aa).

A compositionally biased stretch (basic residues) spans 1 to 20; the sequence is MASAKPKKKNPRLASGRKRA. The disordered stretch occupies residues 1–29; sequence MASAKPKKKNPRLASGRKRARQDVKLNAA.

It belongs to the bacterial ribosomal protein bS20 family.

In terms of biological role, binds directly to 16S ribosomal RNA. This is Small ribosomal subunit protein bS20 from Paracidovorax citrulli (strain AAC00-1) (Acidovorax citrulli).